The following is a 547-amino-acid chain: Chaperonin GroEL (547 aa).

Residues 30-33, 87-91, glycine 414, 478-480, and aspartate 494 each bind ATP; these read TLGP, DGTTT, and DAL.

It belongs to the chaperonin (HSP60) family. As to quaternary structure, forms a cylinder of 14 subunits composed of two heptameric rings stacked back-to-back. Interacts with the co-chaperonin GroES.

It localises to the cytoplasm. It carries out the reaction ATP + H2O + a folded polypeptide = ADP + phosphate + an unfolded polypeptide.. Functionally, together with its co-chaperonin GroES, plays an essential role in assisting protein folding. The GroEL-GroES system forms a nano-cage that allows encapsulation of the non-native substrate proteins and provides a physical environment optimized to promote and accelerate protein folding. The chain is Chaperonin GroEL from Desulforudis audaxviator (strain MP104C).